Consider the following 299-residue polypeptide: Acidic endochitinase Pun g 14, amyloplastic (299 aa).

The transit peptide at 1-26 (MAKTLPFSRALLLSLSILLVARAISA) directs the protein to the amyloplast. The region spanning 27–299 (GDIAIYWGQN…TYSTTIKDQV (273 aa)) is the GH18 domain. Disulfide bonds link Cys46-Cys93 and Cys76-Cys83. Glu153 functions as the Proton donor in the catalytic mechanism. A disulfide bridge links Cys185 with Cys216.

This sequence belongs to the glycosyl hydrolase 18 family. Chitinase class III subfamily. In terms of assembly, monomer. Highly expressed in seeds and to a lesser extent in the skin of the pomegranate fruit (at protein level). Not expressed in leaves or flesh of the fruit (at protein level).

The protein localises to the plastid. It is found in the amyloplast. It catalyses the reaction Random endo-hydrolysis of N-acetyl-beta-D-glucosaminide (1-&gt;4)-beta-linkages in chitin and chitodextrins.. Its activity is regulated as follows. Activity is not affected by addition of 10 mM Ca(2+) or removal of Ca(2+). In terms of biological role, hydrolyzes chitin. Probable calcium storage protein of the seeds. Binds calcium ions with high capacity and low affinity. Involved in seed germination. This is Acidic endochitinase Pun g 14, amyloplastic from Punica granatum (Pomegranate).